The chain runs to 376 residues: Glutamate 5-kinase (376 aa).

An ATP-binding site is contributed by lysine 15. The substrate site is built by serine 56, aspartate 143, and asparagine 155. 175–176 (SD) is an ATP binding site. A PUA domain is found at 281–358 (KGTLTIDAGA…PDVMMILGIT (78 aa)).

This sequence belongs to the glutamate 5-kinase family.

The protein resides in the cytoplasm. It catalyses the reaction L-glutamate + ATP = L-glutamyl 5-phosphate + ADP. It functions in the pathway amino-acid biosynthesis; L-proline biosynthesis; L-glutamate 5-semialdehyde from L-glutamate: step 1/2. Its function is as follows. Catalyzes the transfer of a phosphate group to glutamate to form L-glutamate 5-phosphate. In Rhodopseudomonas palustris (strain TIE-1), this protein is Glutamate 5-kinase.